Here is a 181-residue protein sequence, read N- to C-terminus: 28 kDa heat- and acid-stable phosphoprotein (181 aa).

Positions 1-14 (MPKGGRKGGHKGRV) are enriched in basic residues. A disordered region spans residues 1-118 (MPKGGRKGGH…RREREEIEKQ (118 aa)). At Thr18 the chain carries Phosphothreonine. At Ser19 the chain carries Phosphoserine. Residues 50–59 (DPKKEKKSLD) show a composition bias toward basic and acidic residues. Residue Lys52 forms a Glycyl lysine isopeptide (Lys-Gly) (interchain with G-Cter in SUMO2) linkage. Residues Ser57, Ser60, and Ser63 each carry the phosphoserine modification. Positions 60–69 (SDESEDEDDD) are enriched in acidic residues. Tyr70 is subject to Phosphotyrosine. A compositionally biased stretch (basic and acidic residues) spans 102–118 (DGPKELSRREREEIEKQ). Position 126 is an N6-methyllysine (Lys126). N6-acetyllysine is present on residues Lys132 and Lys164. Basic and acidic residues predominate over residues 151-167 (EEAARKKEEERKAKDDA). The disordered stretch occupies residues 151-181 (EEAARKKEEERKAKDDATLSGKRMQSLSLNK). Phosphoserine occurs at positions 176 and 178.

The protein belongs to the PDAP1 family. Post-translationally, phosphorylated by several kinases in vitro. In vivo, can be phosphorylated by CK2. In terms of tissue distribution, present in all tissues tested, including brain, lung, spleen, kidney, liver, heart, and muscle, in decreasing order of abundance.

The sequence is that of 28 kDa heat- and acid-stable phosphoprotein (Pdap1) from Rattus norvegicus (Rat).